A 389-amino-acid chain; its full sequence is Glutamate 5-kinase (389 aa).

Lysine 16 contacts ATP. The substrate site is built by serine 56, aspartate 143, and asparagine 155. Residue 175 to 176 (SD) coordinates ATP. Residues 281–358 (AGELHVDEGA…AEIEAILGYA (78 aa)) enclose the PUA domain.

Belongs to the glutamate 5-kinase family.

The protein localises to the cytoplasm. The enzyme catalyses L-glutamate + ATP = L-glutamyl 5-phosphate + ADP. It functions in the pathway amino-acid biosynthesis; L-proline biosynthesis; L-glutamate 5-semialdehyde from L-glutamate: step 1/2. In terms of biological role, catalyzes the transfer of a phosphate group to glutamate to form L-glutamate 5-phosphate. This Rhizobium rhizogenes (strain K84 / ATCC BAA-868) (Agrobacterium radiobacter) protein is Glutamate 5-kinase.